We begin with the raw amino-acid sequence, 556 residues long: Formate--tetrahydrofolate ligase 1 (556 aa).

ATP is bound at residue 65–72 (TPAGEGKS).

Belongs to the formate--tetrahydrofolate ligase family.

It catalyses the reaction (6S)-5,6,7,8-tetrahydrofolate + formate + ATP = (6R)-10-formyltetrahydrofolate + ADP + phosphate. The protein operates within one-carbon metabolism; tetrahydrofolate interconversion. This chain is Formate--tetrahydrofolate ligase 1, found in Streptococcus pyogenes serotype M2 (strain MGAS10270).